A 1417-amino-acid chain; its full sequence is MAPTKKPQKNKQSKNEIASSLIPNSGHKKPSKAPKLLISPENEDRLRRLLLNFRRTPSPVTATLSVTQKRKKLNNLYENLSCEGFLDNQIELVLSSLRDGATLETALDWLCLNLPSHELPVNFSNGASRFPSTGRSVAVISKSKKDWNVSAESSVQEVKEVPESEVLVRVKSKRDEEEEDSLSSCQPSQADWIHQYMKRLEEEELESSDDERDKVSGPRSFEVIAKEYCVERYNAIKAKRKGDKSGQSQAGLAICKLKEEMNALGPSEAILESEFQRDRQDCEGAREKEVASSVLDDVHESVNADAFFFQLFDDLTLDTNPVGSCKSEEQESVVSNDSLDDLDLGDLFDEDVPPYVPSPHELLELQKKEIMRELCNEKHLTKLNGIWKKGEAQKIPKALLHQLCQRSGWIAPKFNKVTGEGRNFSYTTSVMRKSSGFGKSRQAGGLVTIQLPHQVEDFESIQDAQNRVAAFALHKLFSDLPVHFAITEPYASLVLIWKQEESLGITSREEQRREKFVESLLEADNFSLTTTSRGIHSALPMVDSCVKENDDLDVVKSNHRARRNSSMAAECSSLKQKQENKKKMQKYKDMLKTRAALPISEVKKDILQKLKEKDVLVVCGETGSGKTTQVPQFILDDMIDSGHGGYCNIICTQPRAITVAQRVADERCEPPPGFDNSVVAYQVRHQNARSDKTRLLFCTTGILLRKLVGDTTLKDVTHIIVDEVHERSLMGDFLLIILKSLIEKQSWDNALPKLKVILMSATVDAHQFSRYFGQCPIITAQGRTHPVTTYFLEDIYERTKYLLASDSPAALSSDTSITDKLGSVNVPRGKKNLMLAGWGDSYLVSEDSLNTSYDSIKYIASAVVDYDLLEELICHIDDTCEEGAILVFLPGMSEINMLLNRLAASYRFRGASGDWLLPLHSSIASTEQKKVFLRPPKGIRKVIIATNIAETSITIEDVVYVIDSGKHKENRYNPHKKLSSMVEDWVSKANARQRMGRAGRVKPGHCFSLYTRHRFEKLMRPYQVPEMLRVPLVELCLHIKLLGLGQIKPFLSKALEPPSESAINSAILLLHKVGALEGDEELTPLGHHLAKLPVDLLIGKMLLYGGIFGCLSPILSIAAFLSCCKSPFVYAKDEQNVDRVKLALLSDKLESSSNLNNNDRQSDHLLMVVAYEKWVRILHEQGFKAAESFCESKFLNSSVMRMMRERRVEFGMLLADIGLINLPKGKGRRKENFDVWFSDKTQPFNMYSQEPEVVKAILCAGLCPNIAEGLVNRLTKPAEETQRYAVWHDGKREVHIHRNSINKNCKAFQYPFIVFLEKLETKKVVYLQDTTVVSPFSILLFGGSINVHHQSGSVTIDGWLKLTAPAQTAVLFKELRLTLHSILKDLIRKPEKSGIVHNEVVKSMVHLLIEEGKPQHT.

Residues 1–12 (MAPTKKPQKNKQ) show a composition bias toward basic residues. Residues 1-37 (MAPTKKPQKNKQSKNEIASSLIPNSGHKKPSKAPKLL) are disordered. Residues 1 to 61 (MAPTKKPQKN…NFRRTPSPVT (61 aa)) constitute a chloroplast transit peptide. Residues 607-781 (LQKLKEKDVL…FGQCPIITAQ (175 aa)) form the Helicase ATP-binding domain. 620-627 (GETGSGKT) lines the ATP pocket. The DEIH box signature appears at 722-725 (DEVH). The 176-residue stretch at 868–1043 (LLEELICHID…ELCLHIKLLG (176 aa)) folds into the Helicase C-terminal domain.

Belongs to the DExH box helicase family.

Its subcellular location is the plastid. The protein resides in the chloroplast. The enzyme catalyses ATP + H2O = ADP + phosphate + H(+). This chain is DExH-box ATP-dependent RNA helicase DExH4, chloroplastic, found in Arabidopsis thaliana (Mouse-ear cress).